The following is a 334-amino-acid chain: O(6)-methylguanine-induced apoptosis 2 (334 aa).

A disordered region spans residues Met1–Pro60. Over residues Lys7–Glu20 the composition is skewed to basic and acidic residues. Residues Tyr29–Ser42 are compositionally biased toward polar residues. STPGR repeat units follow at residues Pro67 to Val74, Pro109 to Pro117, Pro148 to Ala155, Gly187 to Thr206, Gly225 to Pro257, Pro267 to Lys282, and Leu306 to Leu316. The residue at position 72 (Tyr72) is a Phosphotyrosine.

It belongs to the STPG1 family.

The protein resides in the cytoplasm. It localises to the nucleus. In terms of biological role, may positively contribute to the induction of apoptosis triggered by O(6)-methylguanine. The polypeptide is O(6)-methylguanine-induced apoptosis 2 (STPG1) (Homo sapiens (Human)).